Reading from the N-terminus, the 155-residue chain is Deoxyuridine 5'-triphosphate nucleotidohydrolase (155 aa).

Residues R75–G77, N88, and T92–D94 each bind substrate.

Belongs to the dUTPase family. It depends on Mg(2+) as a cofactor.

It carries out the reaction dUTP + H2O = dUMP + diphosphate + H(+). Its pathway is pyrimidine metabolism; dUMP biosynthesis; dUMP from dCTP (dUTP route): step 2/2. This enzyme is involved in nucleotide metabolism: it produces dUMP, the immediate precursor of thymidine nucleotides and it decreases the intracellular concentration of dUTP so that uracil cannot be incorporated into DNA. The protein is Deoxyuridine 5'-triphosphate nucleotidohydrolase of Caulobacter vibrioides (strain ATCC 19089 / CIP 103742 / CB 15) (Caulobacter crescentus).